The following is a 621-amino-acid chain: Rab proteins geranylgeranyltransferase component A 2 (621 aa).

Residues 113-171 (VQDTETLQRSSPLEASATPADSLDSASLPKERQSAYSTSYEVPSRHTEESDRELSLPSA) form a disordered region. A compositionally biased stretch (polar residues) spans 115-125 (DTETLQRSSPL). Residues 155-166 (PSRHTEESDREL) show a composition bias toward basic and acidic residues.

This sequence belongs to the Rab GDI family. In terms of assembly, monomer. Heterotrimer composed of RABGGTA, RABGGTB and CHML; within this trimer, RABGGTA and RABGGTB form the catalytic component B, while CHML (component A) mediates Rab protein binding. Interacts with RAB1A, RAB7A and RAB27A, but has much lower affinity for RAB1A, RAB7A and RAB27A than CHM. Interacts with the non-phosphorylated forms of RAB3A, RAB3B, RAB3C, RAB3D, RAB5B, RAB5C, RAB8A, RAB8B, RAB10, RAB12, RAB35, and RAB43.

The protein resides in the cytoplasm. It is found in the cytosol. Substrate-binding subunit (component A) of the Rab geranylgeranyltransferase (GGTase) complex. Binds unprenylated Rab proteins and presents the substrate peptide to the catalytic component B. The component A is thought to be regenerated by transferring its prenylated Rab back to the donor membrane. Less effective than CHM in supporting prenylation of Rab3 family. The sequence is that of Rab proteins geranylgeranyltransferase component A 2 (Chml) from Mus musculus (Mouse).